A 93-amino-acid polypeptide reads, in one-letter code: Small ribosomal subunit protein uS19 (93 aa).

This sequence belongs to the universal ribosomal protein uS19 family.

Its function is as follows. Protein S19 forms a complex with S13 that binds strongly to the 16S ribosomal RNA. The protein is Small ribosomal subunit protein uS19 of Nitratidesulfovibrio vulgaris (strain DSM 19637 / Miyazaki F) (Desulfovibrio vulgaris).